The sequence spans 98 residues: Sec-independent protein translocase protein TatA (98 aa).

The helical transmembrane segment at 1–21 (MGAMSPWHWAIVALVVVILFG) threads the bilayer. Residues 43–98 (VKEMQNDNSTPAPTAQSAPPPQSAPAELPVADTTTAPVTPPAPVQPQSQHTEPKSA) form a disordered region. The segment covering 66-79 (APAELPVADTTTAP) has biased composition (low complexity).

It belongs to the TatA/E family. The Tat system comprises two distinct complexes: a TatABC complex, containing multiple copies of TatA, TatB and TatC subunits, and a separate TatA complex, containing only TatA subunits. Substrates initially bind to the TatABC complex, which probably triggers association of the separate TatA complex to form the active translocon.

The protein localises to the cell membrane. Part of the twin-arginine translocation (Tat) system that transports large folded proteins containing a characteristic twin-arginine motif in their signal peptide across membranes. TatA could form the protein-conducting channel of the Tat system. The chain is Sec-independent protein translocase protein TatA from Rhodococcus erythropolis (Arthrobacter picolinophilus).